Here is a 386-residue protein sequence, read N- to C-terminus: Probable magnesium transporter NIPA5 (386 aa).

Residues methionine 1 to aspartate 18 are Extracellular-facing. Residues asparagine 19–valine 39 traverse the membrane as a helical segment. The Cytoplasmic segment spans residues lysine 40 to tyrosine 61. 2 helical membrane passes run leucine 62 to phenylalanine 82 and alanine 83 to isoleucine 103. Residues serine 104–lysine 115 lie on the Cytoplasmic side of the membrane. The chain crosses the membrane as a helical span at residues leucine 116–leucine 136. Topologically, residues histidine 137–proline 157 are extracellular. Residues alanine 158–isoleucine 178 traverse the membrane as a helical segment. The Cytoplasmic segment spans residues proline 179 to tyrosine 189. Residues isoleucine 190 to alanine 210 traverse the membrane as a helical segment. The Extracellular segment spans residues leucine 211–glutamine 220. A helical transmembrane segment spans residues leucine 221 to methionine 241. The Cytoplasmic segment spans residues asparagine 242 to valine 255. A helical transmembrane segment spans residues valine 256–phenylalanine 276. Over lysine 277 to serine 283 the chain is Extracellular. Residues glycine 284 to leucine 304 traverse the membrane as a helical segment. The Cytoplasmic segment spans residues histidine 305–serine 386. Residues arginine 352–serine 386 are disordered. Over residues proline 376–serine 386 the composition is skewed to basic and acidic residues.

This sequence belongs to the NIPA (TC 2.A.7) family. Homodimer.

It localises to the cell membrane. It is found in the early endosome. Its function is as follows. Acts as a Mg(2+) transporter. Can also transport other divalent cations such as Fe(2+), Sr(2+), Ba(2+), Mn(2+) and Co(2+) but to a much less extent than Mg(2+). The protein is Probable magnesium transporter NIPA5 of Arabidopsis thaliana (Mouse-ear cress).